We begin with the raw amino-acid sequence, 310 residues long: Carbamate kinase 1 (310 aa).

This sequence belongs to the carbamate kinase family.

Its subcellular location is the cytoplasm. The enzyme catalyses hydrogencarbonate + NH4(+) + ATP = carbamoyl phosphate + ADP + H2O + H(+). The protein operates within metabolic intermediate metabolism; carbamoyl phosphate degradation; CO(2) and NH(3) from carbamoyl phosphate: step 1/1. In Staphylococcus aureus (strain bovine RF122 / ET3-1), this protein is Carbamate kinase 1 (arcC1).